Reading from the N-terminus, the 87-residue chain is Small ribosomal subunit protein bS20 (87 aa).

The segment at 1–28 (MANSAQARKRARQASAQRDHNMSQRSEL) is disordered. Positions 17 to 28 (QRDHNMSQRSEL) are enriched in basic and acidic residues.

This sequence belongs to the bacterial ribosomal protein bS20 family.

Binds directly to 16S ribosomal RNA. The polypeptide is Small ribosomal subunit protein bS20 (Thiobacillus denitrificans (strain ATCC 25259 / T1)).